We begin with the raw amino-acid sequence, 390 residues long: Putative F-box protein At3g52320 (390 aa).

An F-box domain is found at 21-71 (VVFLPEIPEEMLIDILIRLPAKSLMRFKCVSKLWLSLITSRYFTNRFFKPS).

In Arabidopsis thaliana (Mouse-ear cress), this protein is Putative F-box protein At3g52320.